Here is a 274-residue protein sequence, read N- to C-terminus: uncharacterized protein (274 aa).

The protein localises to the plastid. Its subcellular location is the chloroplast. This is an uncharacterized protein from Euglena gracilis.